A 124-amino-acid chain; its full sequence is Small ribosomal subunit protein uS12 (124 aa).

Residues 1-25 are disordered; it reads MPTFNQLVRNGRKPPRWKTSSPALE. The residue at position 89 (Asp-89) is a 3-methylthioaspartic acid. Residues 104–124 form a disordered region; it reads TAGVANRKQSRSKYGAKRPKS. Residues 111–124 show a composition bias toward basic residues; the sequence is KQSRSKYGAKRPKS.

It belongs to the universal ribosomal protein uS12 family. As to quaternary structure, part of the 30S ribosomal subunit. Contacts proteins S8 and S17. May interact with IF1 in the 30S initiation complex.

In terms of biological role, with S4 and S5 plays an important role in translational accuracy. Interacts with and stabilizes bases of the 16S rRNA that are involved in tRNA selection in the A site and with the mRNA backbone. Located at the interface of the 30S and 50S subunits, it traverses the body of the 30S subunit contacting proteins on the other side and probably holding the rRNA structure together. The combined cluster of proteins S8, S12 and S17 appears to hold together the shoulder and platform of the 30S subunit. The chain is Small ribosomal subunit protein uS12 from Solibacter usitatus (strain Ellin6076).